Reading from the N-terminus, the 428-residue chain is Light-independent protochlorophyllide reductase subunit N (428 aa).

Cys30, Cys55, and Cys116 together coordinate [4Fe-4S] cluster.

The protein belongs to the BchN/ChlN family. In terms of assembly, protochlorophyllide reductase is composed of three subunits; BchL, BchN and BchB. Forms a heterotetramer of two BchB and two BchN subunits. [4Fe-4S] cluster serves as cofactor.

The catalysed reaction is chlorophyllide a + oxidized 2[4Fe-4S]-[ferredoxin] + 2 ADP + 2 phosphate = protochlorophyllide a + reduced 2[4Fe-4S]-[ferredoxin] + 2 ATP + 2 H2O. The protein operates within porphyrin-containing compound metabolism; bacteriochlorophyll biosynthesis (light-independent). Component of the dark-operative protochlorophyllide reductase (DPOR) that uses Mg-ATP and reduced ferredoxin to reduce ring D of protochlorophyllide (Pchlide) to form chlorophyllide a (Chlide). This reaction is light-independent. The NB-protein (BchN-BchB) is the catalytic component of the complex. In Bradyrhizobium sp. (strain BTAi1 / ATCC BAA-1182), this protein is Light-independent protochlorophyllide reductase subunit N.